Consider the following 113-residue polypeptide: MHEMAVCESLLSAMEEAAKAQNFSRVTRVRLAIGRFAGIEVEALRFGFDVVMRGSLAEGAELVVLEEDGSAWCFDCCETVALSHRLASCPKCGGERLVPNGGTDMKIKDLEVL.

Histidine 2 is a binding site for Ni(2+). The Zn(2+) site is built by cysteine 73, cysteine 76, cysteine 89, and cysteine 92.

Belongs to the HypA/HybF family.

In terms of biological role, involved in the maturation of [NiFe] hydrogenases. Required for nickel insertion into the metal center of the hydrogenase. This Xanthobacter autotrophicus (strain ATCC BAA-1158 / Py2) protein is Hydrogenase maturation factor HypA.